Consider the following 366-residue polypeptide: GDSL esterase/lipase At1g74460 (366 aa).

An N-terminal signal peptide occupies residues methionine 1 to cysteine 20. Residue serine 30 is the Nucleophile of the active site. N-linked (GlcNAc...) asparagine glycosylation is found at asparagine 113 and asparagine 260. Active-site residues include aspartate 320 and histidine 323.

Belongs to the 'GDSL' lipolytic enzyme family.

It localises to the secreted. In Arabidopsis thaliana (Mouse-ear cress), this protein is GDSL esterase/lipase At1g74460.